The primary structure comprises 753 residues: Rsm22-cox11 tandem protein 2, mitochondrial (753 aa).

The N-terminal 39 residues, Met1–Trp39, are a transit peptide targeting the mitochondrion. Residues Cys323, Cys329, Cys342, and Cys430 each coordinate [4Fe-4S] cluster. A helical membrane pass occupies residues Ile571–Leu591. Topologically, residues Tyr592 to Asn753 are mitochondrial intermembrane.

The protein in the N-terminal section; belongs to the methyltransferase superfamily. Rsm22 family. This sequence in the C-terminal section; belongs to the COX11/CtaG family. In terms of assembly, associates with the mitochondrial ribosome (mitoribosome). Only transiently interacts with the mitoribosome. In terms of processing, specific enzymatic cleavages in vivo by mitochondrial processing peptidase (MPP) yield mature proteins including rsm22-2 and cox11-2.

It is found in the mitochondrion. The protein localises to the mitochondrion inner membrane. Its function is as follows. Mitochondrial ribosome (mitoribosome) assembly factor. Binds at the interface of the head and body domains of the mitochondrial small ribosomal subunit (mt-SSU), occluding the mRNA channel and preventing compaction of the head domain towards the body. Probable inactive methyltransferase: retains the characteristic folding and ability to bind S-adenosyl-L-methionine, but it probably lost its methyltransferase activity. Functionally, exerts its effect at some terminal stage of cytochrome c oxidase synthesis, probably by being involved in the insertion of the copper B into subunit I. The polypeptide is Rsm22-cox11 tandem protein 2, mitochondrial (cox1102) (Schizosaccharomyces pombe (strain 972 / ATCC 24843) (Fission yeast)).